A 193-amino-acid polypeptide reads, in one-letter code: Holliday junction branch migration complex subunit RuvA (193 aa).

A domain I region spans residues 1–64; the sequence is MITSLTGTIL…EDAHLLYGFM (64 aa). The domain II stretch occupies residues 65-139; it reads TVAERDMFRL…DKMGGIAPGP (75 aa). The segment at 139-143 is flexible linker; it reads PMGRG. The interval 144–193 is domain III; the sequence is GAGDPRQEAIAALLTLGYKPAQASQAIAGLADGLGLEDLIRQSLQNLSRH.

This sequence belongs to the RuvA family. In terms of assembly, homotetramer. Forms an RuvA(8)-RuvB(12)-Holliday junction (HJ) complex. HJ DNA is sandwiched between 2 RuvA tetramers; dsDNA enters through RuvA and exits via RuvB. An RuvB hexamer assembles on each DNA strand where it exits the tetramer. Each RuvB hexamer is contacted by two RuvA subunits (via domain III) on 2 adjacent RuvB subunits; this complex drives branch migration. In the full resolvosome a probable DNA-RuvA(4)-RuvB(12)-RuvC(2) complex forms which resolves the HJ.

It is found in the cytoplasm. Its function is as follows. The RuvA-RuvB-RuvC complex processes Holliday junction (HJ) DNA during genetic recombination and DNA repair, while the RuvA-RuvB complex plays an important role in the rescue of blocked DNA replication forks via replication fork reversal (RFR). RuvA specifically binds to HJ cruciform DNA, conferring on it an open structure. The RuvB hexamer acts as an ATP-dependent pump, pulling dsDNA into and through the RuvAB complex. HJ branch migration allows RuvC to scan DNA until it finds its consensus sequence, where it cleaves and resolves the cruciform DNA. The protein is Holliday junction branch migration complex subunit RuvA of Acidithiobacillus ferrooxidans (strain ATCC 53993 / BNL-5-31) (Leptospirillum ferrooxidans (ATCC 53993)).